The following is a 285-amino-acid chain: Proteasome subunit beta (285 aa).

The propeptide at 1-50 is removed in mature form; by autocatalysis; the sequence is MTAEHPARLPQAFMTPGSSSFVDFLAAHDPSLLPSSRALPAGSAPPAPHG. The active-site Nucleophile is T51. Residues 266 to 285 are disordered; the sequence is RTRQARSSRSRHGSLGGDLR.

Belongs to the peptidase T1B family. As to quaternary structure, the 20S proteasome core is composed of 14 alpha and 14 beta subunits that assemble into four stacked heptameric rings, resulting in a barrel-shaped structure. The two inner rings, each composed of seven catalytic beta subunits, are sandwiched by two outer rings, each composed of seven alpha subunits. The catalytic chamber with the active sites is on the inside of the barrel. Has a gated structure, the ends of the cylinder being occluded by the N-termini of the alpha-subunits. Is capped by the proteasome-associated ATPase, ARC.

Its subcellular location is the cytoplasm. The enzyme catalyses Cleavage of peptide bonds with very broad specificity.. The protein operates within protein degradation; proteasomal Pup-dependent pathway. The formation of the proteasomal ATPase ARC-20S proteasome complex, likely via the docking of the C-termini of ARC into the intersubunit pockets in the alpha-rings, may trigger opening of the gate for substrate entry. Interconversion between the open-gate and close-gate conformations leads to a dynamic regulation of the 20S proteasome proteolysis activity. Functionally, component of the proteasome core, a large protease complex with broad specificity involved in protein degradation. In Sanguibacter keddieii (strain ATCC 51767 / DSM 10542 / NCFB 3025 / ST-74), this protein is Proteasome subunit beta.